Consider the following 274-residue polypeptide: Acyl-[acyl-carrier-protein]--UDP-N-acetylglucosamine O-acyltransferase (274 aa).

Belongs to the transferase hexapeptide repeat family. LpxA subfamily. Homotrimer.

Its subcellular location is the cytoplasm. The catalysed reaction is a (3R)-hydroxyacyl-[ACP] + UDP-N-acetyl-alpha-D-glucosamine = a UDP-3-O-[(3R)-3-hydroxyacyl]-N-acetyl-alpha-D-glucosamine + holo-[ACP]. The protein operates within glycolipid biosynthesis; lipid IV(A) biosynthesis; lipid IV(A) from (3R)-3-hydroxytetradecanoyl-[acyl-carrier-protein] and UDP-N-acetyl-alpha-D-glucosamine: step 1/6. In terms of biological role, involved in the biosynthesis of lipid A, a phosphorylated glycolipid that anchors the lipopolysaccharide to the outer membrane of the cell. The protein is Acyl-[acyl-carrier-protein]--UDP-N-acetylglucosamine O-acyltransferase of Bartonella quintana (strain Toulouse) (Rochalimaea quintana).